The chain runs to 119 residues: Large ribosomal subunit protein bL12 (119 aa).

Belongs to the bacterial ribosomal protein bL12 family. In terms of assembly, homodimer. Part of the ribosomal stalk of the 50S ribosomal subunit. Forms a multimeric L10(L12)X complex, where L10 forms an elongated spine to which 2 to 4 L12 dimers bind in a sequential fashion. Binds GTP-bound translation factors.

In terms of biological role, forms part of the ribosomal stalk which helps the ribosome interact with GTP-bound translation factors. Is thus essential for accurate translation. The protein is Large ribosomal subunit protein bL12 of Colwellia psychrerythraea (strain 34H / ATCC BAA-681) (Vibrio psychroerythus).